The chain runs to 330 residues: Thiosulfate transporter TsuA (330 aa).

Topologically, residues 1–2 (MI) are periplasmic. Residues 3-18 (WTGLLVGFLFGIVLQR) form a helical membrane-spanning segment. Residues 19 to 36 (GRICFNSAFRDVLLFKDN) are Cytoplasmic-facing. A helical membrane pass occupies residues 37–59 (YLFKLAVFTLALEMILFVLLSQV). The Periplasmic segment spans residues 60–70 (GLMQMNPKPLN). The chain crosses the membrane as a helical span at residues 71-87 (LVGNIIGGFVFGLGMVL). Topologically, residues 88 to 102 (AGGCASGVTYRVGEG) are cytoplasmic. The chain crosses the membrane as a helical span at residues 103 to 121 (LTTAWFAALFYGLGAYATK). The Periplasmic segment spans residues 122 to 162 (SGAFSWWLSWVGQFKSPLSVEESAYYVKGAGPTISSVLGLN). A helical membrane pass occupies residues 163–180 (PWIPALVIAALFILWAFG). Over 181-189 (TKTTSRETK) the chain is Cytoplasmic. Residues 190 to 211 (FNWKIASVCLALVAGLGFITST) traverse the membrane as a helical segment. The Periplasmic segment spans residues 212–239 (LSGRKYGLGITGGWINLFQGFLTNSPLN). A helical membrane pass occupies residues 240–258 (WEGLEIVGIILGAGVAAAV). Over 259 to 269 (AGEFKLRMPKN) the chain is Cytoplasmic. A helical membrane pass occupies residues 270-289 (PVTYLQVGIGGLLMGIGAVT). Over 290 to 306 (AGGCNIGHFLTGVPQLA) the chain is Periplasmic. Residues 307–326 (LSSWLASIFFILGNWTMAWI) traverse the membrane as a helical segment. At 327-330 (LFRR) the chain is on the cytoplasmic side.

Belongs to the TsuA/YedE (TC 9.B.102) family.

Its subcellular location is the cell inner membrane. It carries out the reaction thiosulfate(in) = thiosulfate(out). Functionally, mediates thiosulfate uptake. The protein is Thiosulfate transporter TsuA of Spirochaeta thermophila (strain ATCC 700085 / DSM 6578 / Z-1203).